The chain runs to 642 residues: Chaperone protein HtpG (642 aa).

Positions 1–348 (MSTKIEQLEF…AQDLSLNVSR (348 aa)) are a; substrate-binding. The tract at residues 349-564 (EILQQDRQIR…AFSMSPALER (216 aa)) is b. Residues 565-642 (MYRASGQPVP…MLANRLARTV (78 aa)) form a c region.

This sequence belongs to the heat shock protein 90 family. In terms of assembly, homodimer.

It is found in the cytoplasm. Functionally, molecular chaperone. Has ATPase activity. The polypeptide is Chaperone protein HtpG (Rhodococcus jostii (strain RHA1)).